The primary structure comprises 612 residues: Rhamnogalacturonan exolyase YesX (612 aa).

Asn-119 serves as a coordination point for substrate. Ca(2+)-binding residues include Asp-120, Asp-125, Asp-127, Asp-129, Glu-131, and Glu-133. Substrate-binding residues include Asp-139, Glu-154, and Arg-174. Ca(2+) is bound by residues Asp-189, Asp-191, Asp-193, Lys-195, and Glu-197. Positions 205 and 222 each coordinate substrate. Ca(2+) is bound by residues His-330, Asp-336, Asp-338, Asp-340, Lys-342, Glu-344, Asp-353, His-354, His-366, Asp-368, Asp-374, Asp-376, Arg-379, Gly-381, Glu-383, and Glu-389. Arg-419 lines the substrate pocket. Ca(2+) is bound by residues Asp-472, Asp-474, Val-476, and Glu-478. 516-518 is a substrate binding site; that stretch reads NGT. Asn-527, Phe-529, Asp-531, Arg-533, Glu-535, Asn-576, and Ala-578 together coordinate Ca(2+). Substrate is bound at residue Tyr-579. Asn-580 is a Ca(2+) binding site.

The protein belongs to the polysaccharide lyase 11 family. As to quaternary structure, monomer. Requires Mn(2+) as cofactor. Zn(2+) is required as a cofactor. The cofactor is Co(2+). It depends on Ca(2+) as a cofactor.

It localises to the secreted. The enzyme catalyses Exotype eliminative cleavage of alpha-L-rhamnopyranosyl-(1-&gt;4)-alpha-D-galactopyranosyluronic acid bonds of rhamnogalacturonan I oligosaccharides containing alpha-L-rhamnopyranose at the reducing end and 4-deoxy-4,5-unsaturated D-galactopyranosyluronic acid at the non-reducing end. The products are the disaccharide 2-O-(4-deoxy-beta-L-threo-hex-4-enopyranuronosyl)-alpha-L-rhamnopyranose and the shortened rhamnogalacturonan oligosaccharide containing one 4-deoxy-4,5-unsaturated D-galactopyranosyluronic acid at the non-reducing end.. Functionally, pectinolytic enzyme that degrades type I rhamnogalacturonan from plant cell walls and releases disaccharide products. Degrades rhamnogalacturonan, polygalacturonic acid and pectic acid. Has very low activity on pectin. The sequence is that of Rhamnogalacturonan exolyase YesX (yesX) from Bacillus subtilis (strain 168).